We begin with the raw amino-acid sequence, 420 residues long: Putative FBD-associated F-box protein At1g78730 (420 aa).

An F-box domain is found at 21–71 (LDWLRKLPDSLLCQVFLNLPTKDVVKTSVLSSTWGNIWRSVPGLDLGYGDF). The 50-residue stretch at 341 to 390 (ISILPGPQCNLPALEFVDILKPMVEKETELKLMSYFLEKSTILKKLTLRL) folds into the FBD domain.

This chain is Putative FBD-associated F-box protein At1g78730, found in Arabidopsis thaliana (Mouse-ear cress).